Reading from the N-terminus, the 451-residue chain is L-seryl-tRNA(Sec) selenium transferase (451 aa).

N6-(pyridoxal phosphate)lysine is present on Lys286.

This sequence belongs to the SelA family. It depends on pyridoxal 5'-phosphate as a cofactor.

It localises to the cytoplasm. It catalyses the reaction L-seryl-tRNA(Sec) + selenophosphate + H(+) = L-selenocysteinyl-tRNA(Sec) + phosphate. It participates in aminoacyl-tRNA biosynthesis; selenocysteinyl-tRNA(Sec) biosynthesis; selenocysteinyl-tRNA(Sec) from L-seryl-tRNA(Sec) (bacterial route): step 1/1. Its function is as follows. Converts seryl-tRNA(Sec) to selenocysteinyl-tRNA(Sec) required for selenoprotein biosynthesis. The polypeptide is L-seryl-tRNA(Sec) selenium transferase (Aliarcobacter butzleri (strain RM4018) (Arcobacter butzleri)).